We begin with the raw amino-acid sequence, 309 residues long: uncharacterized protein (309 aa).

The chain crosses the membrane as a helical span at residues 23–43 (ALVLSSIVNILLLLLIYSTVF).

It belongs to the chlamydial CPn_0593/CT_474/TC_0759 family.

The protein resides in the membrane. This is an uncharacterized protein from Chlamydia trachomatis serovar D (strain ATCC VR-885 / DSM 19411 / UW-3/Cx).